The chain runs to 157 residues: Tripartite terminase subunit 2 (157 aa).

A disordered region spans residues 1–69 (MSWAKQRVPF…DGEDGHALPD (69 aa)). Positions 11 to 27 (LDDDDGEEENDVQDDVD) are enriched in acidic residues.

Belongs to the herpesviridae TRM2 protein family. As to quaternary structure, associates with TRM1 and TRM3 to form the tripartite terminase complex.

It is found in the host nucleus. Component of the molecular motor that translocates viral genomic DNA in empty capsid during DNA packaging. Forms a tripartite terminase complex together with TRM1 and TRM3 in the host cytoplasm. Once the complex reaches the host nucleus, it interacts with the capsid portal vertex. This portal forms a ring in which genomic DNA is translocated into the capsid. This Homo sapiens (Human) protein is Tripartite terminase subunit 2.